The chain runs to 162 residues: Large ribosomal subunit protein uL10 (162 aa).

This sequence belongs to the universal ribosomal protein uL10 family. As to quaternary structure, part of the ribosomal stalk of the 50S ribosomal subunit. The N-terminus interacts with L11 and the large rRNA to form the base of the stalk. The C-terminus forms an elongated spine to which L12 dimers bind in a sequential fashion forming a multimeric L10(L12)X complex.

Functionally, forms part of the ribosomal stalk, playing a central role in the interaction of the ribosome with GTP-bound translation factors. In Borrelia garinii subsp. bavariensis (strain ATCC BAA-2496 / DSM 23469 / PBi) (Borreliella bavariensis), this protein is Large ribosomal subunit protein uL10.